The sequence spans 91 residues: Large ribosomal subunit protein uL23c (91 aa).

The protein belongs to the universal ribosomal protein uL23 family. Part of the 50S ribosomal subunit.

Its subcellular location is the plastid. It is found in the chloroplast. Functionally, binds to 23S rRNA. The sequence is that of Large ribosomal subunit protein uL23c (rpl23) from Chaetosphaeridium globosum (Charophycean green alga).